Here is a 631-residue protein sequence, read N- to C-terminus: Phosphomethylpyrimidine synthase (631 aa).

Residues Asn239, Met268, Tyr297, His333, 353 to 355, 394 to 397, and Glu433 each bind substrate; these read SRG and DGLR. His437 contacts Zn(2+). Tyr460 provides a ligand contact to substrate. His501 serves as a coordination point for Zn(2+). Residues Cys581, Cys584, and Cys589 each coordinate [4Fe-4S] cluster.

This sequence belongs to the ThiC family. Homodimer. The cofactor is [4Fe-4S] cluster.

It catalyses the reaction 5-amino-1-(5-phospho-beta-D-ribosyl)imidazole + S-adenosyl-L-methionine = 4-amino-2-methyl-5-(phosphooxymethyl)pyrimidine + CO + 5'-deoxyadenosine + formate + L-methionine + 3 H(+). It functions in the pathway cofactor biosynthesis; thiamine diphosphate biosynthesis. Its function is as follows. Catalyzes the synthesis of the hydroxymethylpyrimidine phosphate (HMP-P) moiety of thiamine from aminoimidazole ribotide (AIR) in a radical S-adenosyl-L-methionine (SAM)-dependent reaction. The polypeptide is Phosphomethylpyrimidine synthase (Salmonella agona (strain SL483)).